Consider the following 348-residue polypeptide: VIP36-like protein (348 aa).

The signal sequence occupies residues 1-38 (MAVALGPSGWWQRWRRRLSAREVSRMLLLLLLLGSGQG). At 39-313 (PRQVGAGQTF…APLPPLSGLA (275 aa)) the chain is on the lumenal side. One can recognise an L-type lectin-like domain in the interval 49 to 274 (EYLKREHSLS…DVISLKLFEL (226 aa)). Residues Ser93 and Asp128 each coordinate a carbohydrate. Residues Asp159, Tyr161, and Asn163 each contribute to the Ca(2+) site. A carbohydrate-binding residues include Tyr161 and Asn163. N-linked (GlcNAc...) asparagine glycosylation is present at Asn181. Residue His188 participates in a carbohydrate binding. Asp191 provides a ligand contact to Ca(2+). Cys200 and Cys237 are disulfide-bonded. 258-260 (GDL) serves as a coordination point for a carbohydrate. A helical membrane pass occupies residues 314-334 (LFLIVFFSLVFSVFAIVIGII). The Cytoplasmic segment spans residues 335 to 348 (LYNKWQDQSRKRFY). An Endoplasmic reticulum retention signal motif is present at residues 344–346 (RKR).

Its subcellular location is the endoplasmic reticulum membrane. It is found in the golgi apparatus membrane. In terms of biological role, may be involved in the regulation of export from the endoplasmic reticulum of a subset of glycoproteins. May function as a regulator of ERGIC-53. The chain is VIP36-like protein (LMAN2L) from Bos taurus (Bovine).